The chain runs to 437 residues: Ribosomal protein uS12 methylthiotransferase RimO (437 aa).

The 120-residue stretch at 9-128 folds into the MTTase N-terminal domain; that stretch reads NKINVITLGC…LLKALGADYK (120 aa). [4Fe-4S] cluster is bound by residues Cys18, Cys57, Cys91, Cys152, Cys156, and Cys159. Residues 138–368 enclose the Radical SAM core domain; that stretch reads TTPKNYAYLK…MELQSQISWD (231 aa). One can recognise a TRAM domain in the interval 371-437; it reads QEKVGQVFRC…TEFDLYGEPA (67 aa).

This sequence belongs to the methylthiotransferase family. RimO subfamily. [4Fe-4S] cluster serves as cofactor.

It is found in the cytoplasm. The catalysed reaction is L-aspartate(89)-[ribosomal protein uS12]-hydrogen + (sulfur carrier)-SH + AH2 + 2 S-adenosyl-L-methionine = 3-methylsulfanyl-L-aspartate(89)-[ribosomal protein uS12]-hydrogen + (sulfur carrier)-H + 5'-deoxyadenosine + L-methionine + A + S-adenosyl-L-homocysteine + 2 H(+). Functionally, catalyzes the methylthiolation of an aspartic acid residue of ribosomal protein uS12. This Flavobacterium johnsoniae (strain ATCC 17061 / DSM 2064 / JCM 8514 / BCRC 14874 / CCUG 350202 / NBRC 14942 / NCIMB 11054 / UW101) (Cytophaga johnsonae) protein is Ribosomal protein uS12 methylthiotransferase RimO.